Here is a 202-residue protein sequence, read N- to C-terminus: Glycolipid transfer protein 1 (202 aa).

Aspartate 52, asparagine 56, tryptophan 99, and histidine 138 together coordinate a ganglioside GM3 (d18:1(4E)).

It belongs to the GLTP family.

Its function is as follows. May be involved in glycolipids transfer. This chain is Glycolipid transfer protein 1, found in Arabidopsis thaliana (Mouse-ear cress).